A 274-amino-acid chain; its full sequence is Urease accessory protein UreD (274 aa).

This sequence belongs to the UreD family. UreD, UreF and UreG form a complex that acts as a GTP-hydrolysis-dependent molecular chaperone, activating the urease apoprotein by helping to assemble the nickel containing metallocenter of UreC. The UreE protein probably delivers the nickel.

It is found in the cytoplasm. Its function is as follows. Required for maturation of urease via the functional incorporation of the urease nickel metallocenter. The sequence is that of Urease accessory protein UreD from Lachnoclostridium phytofermentans (strain ATCC 700394 / DSM 18823 / ISDg) (Clostridium phytofermentans).